The primary structure comprises 2038 residues: MAPNKKTILLFGDQTDSWVDGIDRLYQDAASIPWLQSFLDDLTHTFKTHTVGMDAVLRNSLGDFANLQELAEKYRYTTDDVGMAQAFLIYAVRAGILLKWAKYEPSLLSTDENQPEWVGISGGLISLSVLAVAETFEKLYEACLEVAGLLARLCRFTSVKSRSMEDRSGAWGWTVLGIGANELRNALDQYQQSMGIPPIKRAQVAVTGHRWNTIVGPPSILQLIVKECPAIRSLPKNELNIHALQHTVVTSRADLDYIVGDSTLLSQPLSLTFTLWGMDDPRAHYTTWGDMLRAICSQALSRPLDITHVVDQLSSKLRSFPQLDVKSIGPCSHLSYLTNVLKSAGRTVSVADDHPPSTPPKQLPGRIAIVGMAGRGPGSDNVEEFWNVIMSKLDLCEEIPEDRFNLSEFYRSKHDSGCTTTTKFGCFMDKPGHFDNRFFHISPREALLMDPGHRQFLMTTYEALEMAGYSDGATRAVDPARIATFFGQCNDDWHDVSHHTLGCDAYTLQGVQRAFGAGRIAFQFKWEGPTYSLDSACASTASSIHLACTSLLAKETDMAVAGAANVVGYPHSWTSLSKSGVLSDTGNCKTFRDDADGYCRADFVGTVVLKRLEDAIAHNDNILAVVAASGRNHSGNSSSITTSDAKAQEKLYRKMMHNARVSPNDISYVEMHGTGTKVGDPAEMGALASLFSHRRTPKPVVVGGVKANVGHSESKQAAGVASLLKCIMMFQKNILPPQAGMPHALNPNFPPLSEINIEIPSEPSTFESPVSQPRRILLNNFDAAGGNACILLEDFGNNMVKKSDPRVHHTVVTSSRTQASYHGNKAKLLQWLRQNPGARIEDVAYTTTARRTHHPIRFAVTASSTQELISKLEADTADSPAAKESPVVFVFTGQGSHYAGMGSELYETSPVFRETVNLCATICEEQNFPPFLDLITQSDSEMSDKTTLEVQLAVLTLEIGLAALWRSIGIQPSVVIGHSLGEYAALHVSGVLSLADVLYLVGQRALLILQRCEVNTSAMLSVAMPVTDTHAFLEAQADPSCEIACVNSTNASVISGSIENITELQAGLKARSKMLSVPYGFHSSQMDPILADYAALAGGVTFSEPKIPVASTLLASLVDTSGTFHAGYMARQCRQPVNFVGALEAIQSNYSDPIWLEIGPSQVCSSFVRATLSPPPSKILSTLDKGTNAWLSLGKCMSSLYKHGATIDWLALHQPYVDNLSLLNLPTYAWDLKEFWIRYTETKDQLPTSTTNGHETFKANISTCAQQVVEHISPPNMKVTFRASLSDPGFKALIDGHRLRDRSVCPGSVFSEAGLAAVTYVLQLHHSKSLKLPALVLRNLSLKRPLTYDLVGPDGELITVVAPGGSSNDTFKVAWKASKGNVSYSLGDCMVAACDGQLIQARWDKVSYFIRSRVDEIVASSKSGISHRLQPQILYGLFANTVKYDAAFKCIQEAYISSDFQEAAAVIVLNSDPVGTKFVASPYWGESLVHLAGFVVNSNPSRQSHDTTFMMDGFESFEQTVIPEPGKPYHTYVRVTGNESASVVCDVYIFDDDKLIMHCAGLHFHEVENAVLDQLLGGTNTSNTTRDQPAPIMSRKEVPKPVDTTEKVEAVSNDSQSDAHVLDSILKIISKETGSDLADFQDDTLIADLGVDSIMAIEIASQVTEETGMDLLPSFIIDYPAIGDLRRVFAPKSTHISLDNDLSRPSLVDDTSQALQSSGSESFDQPPTSVTSTSDSGSIVKIDLGPDVDSPAPKIKITLLQGRPGNGRTPFYLIADGTGTIATYIHLPQFKSQIPIYGIDSPFLRCPTRFTTDVGITGAARFITEALMKAQPEGTFVLGGFSGGAMLAYEVCRQLAAANRKVDSLMLIDMCSPRSKTVEDKNDIGWAIFESISRQNGLWRSTDMTRQHLQAIFAAVATYHPQPLKASERPKRTAIIWAEKGMIDRCAGDSELMQKLAKRGIPTEPYPKFMEDSELGPVAWGLPHKTKNDLGPNGWERYVGDALCLSMPADHLEMPMPGHVHLLHEKMTRAFEFFNEAG.

An N-terminal acylcarrier protein transacylase domain (SAT) region spans residues 9–246 (LLFGDQTDSW…NELNIHALQH (238 aa)). The Ketosynthase family 3 (KS3) domain occupies 364-794 (PGRIAIVGMA…GGNACILLED (431 aa)). Residues Cys537, His672, and His711 each act as for beta-ketoacyl synthase activity in the active site. Residues 888–1172 (VFVFTGQGSH…VCSSFVRATL (285 aa)) are malonyl-CoA:ACP transacylase (MAT) domain. Ser979 (for acyl/malonyl transferase activity) is an active-site residue. A product template (PT) domain region spans residues 1221–1572 (SLLNLPTYAW…HFHEVENAVL (352 aa)). Residues 1254–1405 (HETFKANIST…GQLIQARWDK (152 aa)) are N-terminal hotdog fold. Positions 1254 to 1573 (HETFKANIST…FHEVENAVLD (320 aa)) constitute a PKS/mFAS DH domain. The tract at residues 1425 to 1573 (ISHRLQPQIL…FHEVENAVLD (149 aa)) is C-terminal hotdog fold. The Carrier domain maps to 1616–1693 (QSDAHVLDSI…DLRRVFAPKS (78 aa)). Ser1653 is subject to O-(pantetheine 4'-phosphoryl)serine. Residues 1700–1738 (NDLSRPSLVDDTSQALQSSGSESFDQPPTSVTSTSDSGS) are disordered. Residues 1709–1737 (DDTSQALQSSGSESFDQPPTSVTSTSDSG) are compositionally biased toward polar residues. A thioesterase (TE) domain region spans residues 1778-1882 (TGTIATYIHL…PRSKTVEDKN (105 aa)). His2021 serves as the catalytic For thioesterase activity.

It participates in mycotoxin biosynthesis. In terms of biological role, non-reducing polyketide synthase; part of the gene cluster that mediates the biosynthesis of zearalenone (ZEA), a nonsteroid estrogen that is a contaminant of cereal grains and causes estrogenic disorders in humans and animals. The ZEA backbone is synthesized from a single acetyl-CoA molecule and eight malonyl-CoA molecules. The reducing polyketide synthase ZEA2 is proposed to synthesize a reduced hexaketide intermediate by using different combinations of its reductive domains during each round of condensation. The hexaketide thioester is then transacylated to the non-reducing polyketide synthase ZEA1 and is further condensed with three malonyl-CoAs without reductive tailoring to yield a mixed reduced/unreduced nonaketide. ZEA1 must be able to interact with ZEA2 to facilitate starter-unit acyltransfer and initiate polyketide biosynthesis. ZEA1 also mediates the required C2-C7 cyclization to form the resorcylate core and catalyzes the formation of the macrolactone. ZEA1 exhibits broad starter-unit specificities toward fatty acyl-CoAs ranging in sizes between C6 and C16 and displays the highest activity toward decanoyl-CoA. ZEB1 is then responsible for the chemical conversion of beta-zearalenonol (beta-ZOL) to ZEA in the biosynthetic pathway. This is Non-reducing polyketide synthase ZEA1 from Gibberella zeae (strain ATCC MYA-4620 / CBS 123657 / FGSC 9075 / NRRL 31084 / PH-1) (Wheat head blight fungus).